Consider the following 153-residue polypeptide: UPF0311 protein RPA1785 (153 aa).

This sequence belongs to the UPF0311 family.

In Rhodopseudomonas palustris (strain ATCC BAA-98 / CGA009), this protein is UPF0311 protein RPA1785.